We begin with the raw amino-acid sequence, 143 residues long: Photosystem I reaction center subunit IV A, chloroplastic (143 aa).

Residues M1 to R44 constitute a chloroplast transit peptide. Positions V43 to S85 are disordered. A compositionally biased stretch (low complexity) spans D48 to K73.

The protein belongs to the PsaE family. In terms of processing, 2 isoforms may exist. With or without the N-terminal alanine.

The protein resides in the plastid. It is found in the chloroplast thylakoid membrane. In terms of biological role, stabilizes the interaction between PsaC and the PSI core, assists the docking of the ferredoxin to PSI and interacts with ferredoxin-NADP oxidoreductase. The sequence is that of Photosystem I reaction center subunit IV A, chloroplastic (PSAE1) from Arabidopsis thaliana (Mouse-ear cress).